The sequence spans 100 residues: ATP-dependent Clp protease adapter protein ClpS (100 aa).

This sequence belongs to the ClpS family. In terms of assembly, binds to the N-terminal domain of the chaperone ClpA.

Functionally, involved in the modulation of the specificity of the ClpAP-mediated ATP-dependent protein degradation. This chain is ATP-dependent Clp protease adapter protein ClpS, found in Neisseria meningitidis serogroup B (strain ATCC BAA-335 / MC58).